The following is a 299-amino-acid chain: MWLPWALLLLWVPGCFALSKCRTVAGPVGGSLSVQCPYEKEHRTLNKYWCRPPQIFLCDKIVETKGSAGKRNGRVSIRDSPANLSFTVTLENLTEEDAGTYWCGVDTPWLRDFHDPVVEVEVSVFPASTSMTPASITAAKTSTITTAFPPVSSTTLFAVGATHSASIQEETEEVVNSQLPLLLSLLALLLLLLVGASLLAWRMFQKWIKAGDHSELSQNPKQAATQSELHYANLELLMWPLQEKPAPPREVEVEYSTVASPREELHYASVVFDSNTNRIAAQRPREEEPDSDYSVIRKT.

The signal sequence occupies residues 1 to 17 (MWLPWALLLLWVPGCFA). The Extracellular segment spans residues 18-180 (LSKCRTVAGP…TEEVVNSQLP (163 aa)). The region spanning 19–123 (SKCRTVAGPV…HDPVVEVEVS (105 aa)) is the Ig-like V-type domain. Cysteine 36 and cysteine 103 are joined by a disulfide. N-linked (GlcNAc...) asparagine glycosylation is found at asparagine 83 and asparagine 92. A helical membrane pass occupies residues 181-201 (LLLSLLALLLLLLVGASLLAW). At 202–299 (RMFQKWIKAG…DSDYSVIRKT (98 aa)) the chain is on the cytoplasmic side. The interval 278 to 299 (RIAAQRPREEEPDSDYSVIRKT) is disordered. At tyrosine 293 the chain carries Phosphotyrosine.

The protein belongs to the CD300 family. Upon tyrosine-phosphorylation, interacts with PTN6/SHP-1 and PTPN11/SHP-2 and INPP5D. In terms of processing, phosphorylated on tyrosine. N-glycosylated. As to expression, expressed not only by natural killer (NK) cells but also by T-cell subsets, B-cells, dendritic cells, mast cells, granulocytes and monocytes.

The protein resides in the cell membrane. Inhibitory receptor which may contribute to the down-regulation of cytolytic activity in natural killer (NK) cells, and to the down-regulation of mast cell degranulation. Negatively regulates the Toll-like receptor (TLR) signaling mediated by MYD88 but not TRIF through activation of PTPN6. This is CMRF35-like molecule 8 (CD300A) from Homo sapiens (Human).